The sequence spans 398 residues: Streptopain (398 aa).

An N-terminal signal peptide occupies residues 1–27; that stretch reads MNKKKLGIRLLSLLALGGFVLANPVFA. The propeptide occupies 28-145; it reads DQNFARNEKE…TTYAGTAEIK (118 aa). C192 (nucleophile) is an active-site residue. C192 bears the Cysteine methyl disulfide; in zymogen form mark. A protein contacts are provided by S282 and G339. Residue H340 is the Proton acceptor of the active site. The interval 368-390 is C-terminal active site loop; sequence RLDALNPSALGTGGGAGGFNGYQ.

This sequence belongs to the peptidase C10 family. In terms of assembly, monomer. In terms of processing, the mature protease is derived from the precursor sequence by cleavage, either in cis via an autocatalytic mechanism, or in trans by mature SpeB or host proteases (trypsin, plasmin or subtilisin). Maturation can involve a number of protein cleavage intermediates. Mature SpeB probably plays the most important role in protein maturation in physiological conditions. Post-translationally, methylthiolation at Cys-192 of the inactive zymogen form is probably involved in the mechanism of secretion of the proteinase into the culture fluid.

Its subcellular location is the secreted. The protein resides in the host extracellular space. The protein localises to the host cytoplasm. The catalysed reaction is Preferential cleavage with hydrophobic residues at P2, P1 and P1'.. Synthesized as an inactive zymogen to protect the intracellular components of the bacteria from proteolytic activity during protein production. Once secreted into the extracellular milieu, cleaved into the active protease: maturation can be mediated in cis by autocatalytic cleavage, or in trans by mature SpeB or host proteases. Protease activity is strongly inhibited by zinc and copper, which prevent its maturation into an active protease: inhibition by metal ions may be required to prevent proteolysis of streptococcal proteins. Functionally, cysteine protease that acts as a key streptococcal virulence factor by cleaving host proteins involved in immune response. Triggers inflammation by mediating cleavage of host proteins, which can both promote host pathogenesis by triggering sterile inflammation and/or restrict streptococcal infection, depending on host immune statue and infection site. Cleaves host gasdermin-A (GSDMA) in epithelial cells, promoting GSDMA activation and formation of gasdermin pores, triggering pyroptosis. Pyroptosis triggers the elimination of the infected skin cell, depriving the pathogen of its protective niche, while inducing an inflammatory response. This ultimately prevents bacterial penetration of the epithelial barrier and a subsequent systemic dissemination of the pathogen. Also mediates cleavage of the cytokine precursor interleukin-1 beta (IL1B) to its mature form, resulting in inflammation and septic shock. SpeB-mediated maturation of IL1B plays a dual role depending on infection site: while IL1B inflammatory response prevents bacterial growth during invasive skin infections, it promotes streptococcal infection of the nasopharynx by disrupting colonization resistance mediated by the microbiota. Inhibits host autophagy be catalyzing cleavage and inactivation of key autophagy factors, such as CALCOCO2, NBR1 and SQSTM1. Cleaves and inhibits a number of complement factors, such as C2, C3-beta chain of C3, C4, C5 or SERPING1, thereby promoting evasion of host immunity. May also impair adaptive immunity by catalyzing cleavage and degradation of host immunoglobulins to promote immune system evasion; the relevance of this activity is however unsure in vivo. Catalyzes maturation and release of the peptide hormone bradykinin from the precursor Kininogen-1 (KNG1) to produce hypotension during septic shock. Also involved in bacterial translocation across the host epithelial barrier by mediating cleavage and degradation of host epithelial junction proteins, such as CDH1 and OCLN. Additionally, has been involved in degradation of fibronectin and vitronectin, two host extracellular matrix proteins involved in tissue integrity. Also able to catalyze cleavage and degradation of streptococcal proteins, such as C5a peptidase, EndoS or SmeZ. Degradation of streptococcal proteins is however strictly regulated to preserve integrity of other virulence factors. This is Streptopain (speB) from Streptococcus pyogenes serotype M3 (strain ATCC BAA-595 / MGAS315).